The primary structure comprises 779 residues: MENFFIVKKLASDTYGKALNVDLDRLLQAQNKYTLQELISYCSALTILHYDYSTLAARLSVYLLHQSTASSFSEAVSLQAAQSCSRLSPQFVDVVYKYKAIFDSYIDYSRDYKLTLLGIETMKNSYLLKNKDGVIMERPQDAYMRVAIMIYGMGRVVNMKMILLTYDLLSRHVITHASPTMFNAGTKKPQLSSCFLLNVNDNLENLYDMVKTAGIISGGGGGIGLCLSGIRAKNSFISGSGLRSNGIQNYIVLQNASQCYANQGGLRPGAYAVYLELWHQDIFTFLQMPRLKGQMAEQRLNAPNLKYGLWVPDLFMEILEDQIHDRGDGTWYLFSPDQAPNLHKVFDLERSRHKNAHREFRKLYYQYVAEKRYTGVTTAKEIIKEWFKTVIQVGNPYIGFKDAINRKSNLSHVGTITNSNLCIEITIPCWEGSEAEQGVCNLAAVNLAAFIRENSYDYRGLIEAAGNVTENLDNIIDNGYYPTEATRRSNMRHRPIGIGVFGLADVFASFKMKFGSPEAIAMDEAIHAALYYGAMRRSVELAKEKGSHPSFPGSAASKGLLQPDLWVRCDDLVFSWEERVAQTTQGVLTPKKWWQLRLAAMQGVRNGYLTALMPTATSSNSTGKNECFEPFTSNLYTRRTLSGEFIVLNKYLIDDLKEINLWTEAIQQQLLNAGGSIQHILDIPAEIRERYKTSREMNQKILTKHAAARNPFVSQSMSLNYYFYEPELSQVLTVLVLGWKKGLTTGSYYCHFSPGAGTQKKIIRNSEKACSADCEACLL.

Substrate is bound by residues S178, 193–194 (SC), G222, 420–424 (NLCIE), and 614–618 (PTATS). An intrachain disulfide couples C194 to C440. N420 serves as the catalytic Proton acceptor. Catalysis depends on C422, which acts as the Cysteine radical intermediate. E424 serves as the catalytic Proton acceptor.

Belongs to the ribonucleoside diphosphate reductase large chain family. Heterotetramer composed of a homodimer of the large subunit (R1) and a homodimer of the small subunit (R2). Larger multisubunit protein complex are also active, composed of (R1)n(R2)n.

The enzyme catalyses a 2'-deoxyribonucleoside 5'-diphosphate + [thioredoxin]-disulfide + H2O = a ribonucleoside 5'-diphosphate + [thioredoxin]-dithiol. Its activity is regulated as follows. Under complex allosteric control mediated by deoxynucleoside triphosphates and ATP binding. The type of nucleotide bound at the specificity site determines substrate preference. It seems probable that ATP makes the enzyme reduce CDP and UDP, dGTP favors ADP reduction and dTTP favors GDP reduction. In terms of biological role, ribonucleoside-diphosphate reductase holoenzyme provides the precursors necessary for viral DNA synthesis. Allows virus growth in non-dividing cells. Catalyzes the biosynthesis of deoxyribonucleotides from the corresponding ribonucleotides. The chain is Ribonucleoside-diphosphate reductase large subunit from Ornithodoros (relapsing fever ticks).